The sequence spans 653 residues: tRNA 5-methylaminomethyl-2-thiouridine biosynthesis bifunctional protein MnmC (653 aa).

The interval 1-236 (MPDRLVPATL…KFAMLVGEYA (236 aa)) is tRNA (mnm(5)s(2)U34)-methyltransferase. An FAD-dependent cmnm(5)s(2)U34 oxidoreductase region spans residues 260–653 (IGAGLAGCAL…IRALRGRKLG (394 aa)).

It in the N-terminal section; belongs to the methyltransferase superfamily. tRNA (mnm(5)s(2)U34)-methyltransferase family. This sequence in the C-terminal section; belongs to the DAO family. It depends on FAD as a cofactor.

It is found in the cytoplasm. The catalysed reaction is 5-aminomethyl-2-thiouridine(34) in tRNA + S-adenosyl-L-methionine = 5-methylaminomethyl-2-thiouridine(34) in tRNA + S-adenosyl-L-homocysteine + H(+). Catalyzes the last two steps in the biosynthesis of 5-methylaminomethyl-2-thiouridine (mnm(5)s(2)U) at the wobble position (U34) in tRNA. Catalyzes the FAD-dependent demodification of cmnm(5)s(2)U34 to nm(5)s(2)U34, followed by the transfer of a methyl group from S-adenosyl-L-methionine to nm(5)s(2)U34, to form mnm(5)s(2)U34. This chain is tRNA 5-methylaminomethyl-2-thiouridine biosynthesis bifunctional protein MnmC, found in Burkholderia vietnamiensis (strain G4 / LMG 22486) (Burkholderia cepacia (strain R1808)).